A 136-amino-acid chain; its full sequence is NADPH-dependent 7-cyano-7-deazaguanine reductase (136 aa).

Cys50 serves as the catalytic Thioimide intermediate. Asp57 functions as the Proton donor in the catalytic mechanism. Residues 72–74 (YEL) and 91–92 (HE) each bind substrate.

It belongs to the GTP cyclohydrolase I family. QueF type 1 subfamily.

It localises to the cytoplasm. It catalyses the reaction 7-aminomethyl-7-carbaguanine + 2 NADP(+) = 7-cyano-7-deazaguanine + 2 NADPH + 3 H(+). The protein operates within tRNA modification; tRNA-queuosine biosynthesis. Its function is as follows. Catalyzes the NADPH-dependent reduction of 7-cyano-7-deazaguanine (preQ0) to 7-aminomethyl-7-deazaguanine (preQ1). In Prochlorococcus marinus (strain MIT 9312), this protein is NADPH-dependent 7-cyano-7-deazaguanine reductase.